We begin with the raw amino-acid sequence, 4652 residues long: Low-density lipoprotein receptor-related protein 2 (4652 aa).

The N-terminal stretch at 1 to 25 (MERWAAAAACTLLLAFAACLAPASG) is a signal peptide. Residues 26–4422 (RECLGNEFRC…SKGISPGTTV (4397 aa)) are Extracellular-facing. LDL-receptor class A domains follow at residues 27 to 63 (ECLGNEFRCSNGHCITESWRCDGTRDCLDGSDEIGCP), 66 to 104 (TCGSTQFHCENEDVCIPLYWVCDGEEDCSNGADEHQRCP), 108 to 144 (TCSSHHFTCTNGECIPVEYRCDHSTDCLDGTDEINCR), 142 to 181 (NCRYPVCQQQTCHNGACYNTSQRCDGEIDCRDASDELNCT), 183 to 219 (RCLRNEFQCGSGECIPRDYVCDHDPDCSDSSDEHSCS), 223 to 259 (PCKGNEFACSNGFCINQNWVCDGMADCLDNSDEDGCE), and 267 to 308 (ECYP…RVCD). 21 disulfides stabilise this stretch: C28–C40, C35–C53, C47–C62, C67–C80, C74–C93, C87–C103, C109–C121, C116–C134, C128–C143, C143–C158, C153–C171, C165–C180, C184–C196, C191–C209, C203–C218, C224–C236, C231–C249, C243–C258, C268–C281, C275–C294, and C288–C307. 2 N-linked (GlcNAc...) asparagine glycosylation sites follow: N160 and N179. An N-linked (GlcNAc...) asparagine glycan is attached at N341. The 39-residue stretch at 348–386 (DFNDCQIWGICDHFCEDRIGHHQCFCAEGYVLEHEQHCR) folds into the EGF-like 1; calcium-binding domain. 3 cysteine pairs are disulfide-bonded: C352–C362, C358–C371, and C373–C385. An N-linked (GlcNAc...) asparagine glycan is attached at N388. 8 LDL-receptor class B repeats span residues 436 to 478 (SKVF…DWIN), 479 to 521 (NKLY…DPTV), 522 to 568 (GYLF…DLVA), 569 to 613 (KRVY…FEDN), 753 to 795 (NAIF…DWIS), 796 to 837 (RNLY…HPIA), 838 to 881 (GYIF…DWGS), and 882 to 925 (SRLY…FGEY). N771 carries an N-linked (GlcNAc...) asparagine glycan. N866 is a glycosylation site (N-linked (GlcNAc...) asparagine). A glycan (N-linked (GlcNAc...) asparagine) is linked at N1015. Residues 1025–1061 (QCGALSFPCNNGRCVPLHYRCDGVDDCHDNSDEVQCG) enclose the LDL-receptor class A 8 domain. 3 cysteine pairs are disulfide-bonded: C1026–C1038, C1033–C1051, and C1045–C1060. N1064 carries an N-linked (GlcNAc...) asparagine glycan. LDL-receptor class A domains lie at 1066–1104 (SCAPSAFACGHGGGECIPSYWRCDNHNDCVDGSDEQNCS), 1110–1146 (SCRADYFTCDNHMCIPKNWLCDTDNDCGDGSDEKRCD), 1150–1186 (TCSPTQFHCPNHRCIDLAFVCDGDKDCADGSDESACV), 1188–1225 (NCTDSQFKCVGSNKCISNTYRCDGVSDCSDHSDEIDCP), 1231–1269 (MCRQDEFQCREDGICIPDSWECDGHPDCLTGSDEHSGCP), 1272–1308 (TCPXSRFLCANGNCIFRDWLCDGDNDCRDMSDEKDCP), and 1313–1351 (LCPSWQWQCPGHSICVNLSSVCDGISDCPHGTDESPLCN). Cystine bridges form between C1067-C1081, C1074-C1094, C1088-C1103, C1111-C1123, C1118-C1136, C1130-C1145, C1151-C1163, C1158-C1176, and C1170-C1185. Residue N1102 is glycosylated (N-linked (GlcNAc...) asparagine). Ca(2+)-binding residues include W1128, D1131, D1133, D1135, D1141, and E1142. N-linked (GlcNAc...) asparagine glycosylation occurs at N1188. Intrachain disulfides connect C1189–C1202, C1196–C1215, C1209–C1224, C1232–C1245, C1239–C1258, C1252–C1268, C1273–C1285, C1280–C1298, C1292–C1307, C1314–C1327, C1321–C1340, and C1334–C1350. Ca(2+) is bound by residues Y1207, D1210, V1212, D1214, D1220, and E1221. Residue N1329 is glycosylated (N-linked (GlcNAc...) asparagine). N-linked (GlcNAc...) asparagine glycosylation is found at N1385, N1452, N1498, and N1552. 10 LDL-receptor class B repeats span residues 1480-1522 (GRIF…DWVG), 1523-1565 (RNLY…DPRV), 1568-1611 (RVIF…DYPT), 1612-1654 (RLLY…TIFE), 1655-1696 (DSIY…VHPA), 1789-1831 (QFLY…DWLS), 1832-1881 (RNLY…DPAK), 1882-1929 (GKLY…DIQE), 1930-1971 (QKLY…YGPY), and 1972-2012 (LYYA…YRRR). 2 N-linked (GlcNAc...) asparagine glycosylation sites follow: N1677 and N1809. N2053 carries N-linked (GlcNAc...) asparagine glycosylation. LDL-receptor class B repeat units lie at residues 2105–2154 (GFVY…DWVA), 2155–2199 (GNLY…DPKN), 2200–2243 (RYLF…DHNS), 2244–2287 (GYIY…FGNS), 2429–2475 (NRIY…DWIG), 2476–2516 (RRIY…DPCQ), 2517–2560 (GYMY…DYKE), 2561–2602 (NLLY…YGQY), and 2603–2644 (IYWT…VVNN). N2175 and N2222 each carry an N-linked (GlcNAc...) asparagine glycan. N2485 carries an N-linked (GlcNAc...) asparagine glycan. LDL-receptor class A domains lie at 2696–2734 (RCNSTQFTCLSGYCILESLKCNDIDECGDSSDELETLCA), 2737–2773 (TCPPTSFTCANGRCIQRHFRCDHYNDCGDNSDESGCR), 2776–2815 (SCNITTEFSCNNGKCLPLQLVCDGIDHCNDNNTSDEKNCA), 2818–2857 (TCLPDYIKCANSNVCIPRLFLCDGDNDCGDMSDENPIYCV), 2860–2897 (TCKNNEFQCTSGSCIPELWHCDGERDCDDGSDEPATCV), 2902–2941 (TCSSDEFKCDNNRCIQMEWICDGDNDCGDMSDEDGRHHCE), 2944–2986 (NCSS…QNCT), 2989–3025 (NCSGTEFRCSNGLCIPNWFRCDRRNDCGDYSDERNCK), 3028–3066 (ACDENLFTCQNGICTYKSYICDGENDCGDNSDELEHLCH), and 3071–3107 (TCPPHQFRCNNGNCIEMVKVCNHQADCSDNSDEERCG). Intrachain disulfides connect C2697–C2709, C2704–C2722, C2716–C2733, C2738–C2750, C2745–C2763, C2757–C2772, C2777–C2790, C2785–C2803, C2797–C2814, C2819–C2832, C2826–C2845, C2839–C2856, C2861–C2873, C2868–C2886, C2880–C2896, C2903–C2915, C2910–C2928, and C2922–C2940. N2698 carries N-linked (GlcNAc...) asparagine glycosylation. The N-linked (GlcNAc...) asparagine glycan is linked to N2778. N-linked (GlcNAc...) asparagine glycosylation is found at N2806 and N2807. The N-linked (GlcNAc...) asparagine glycan is linked to N2944. 3 cysteine pairs are disulfide-bonded: C2945–C2962, C2952–C2975, and C2969–C2985. Residues N2984 and N2989 are each glycosylated (N-linked (GlcNAc...) asparagine). Cystine bridges form between C2990–C3002, C2997–C3015, C3009–C3024, C3029–C3041, C3036–C3054, C3048–C3065, C3072–C3084, C3079–C3097, and C3091–C3106. N3122 is a glycosylation site (N-linked (GlcNAc...) asparagine). The region spanning 3149 to 3189 (DIDECKETPSVCSQKCENLLGSYICKCAPGYTREPDGRSCR) is the EGF-like 2; calcium-binding domain. 3 cysteine pairs are disulfide-bonded: C3153-C3164, C3160-C3173, and C3175-C3188. N-linked (GlcNAc...) asparagine glycans are attached at residues N3208, N3254, N3312, and N3352. 5 LDL-receptor class B repeats span residues 3236–3278 (ERLY…DWVT), 3279–3321 (RKLY…DKPR), 3330–3373 (GYVY…DYTN), 3374–3417 (DLLY…FEDT), and 3418–3458 (IYWT…YHPY). N3435 and N3444 each carry an N-linked (GlcNAc...) asparagine glycan. LDL-receptor class A domains lie at 3509–3547 (MCSSTQFLCANNEMCIPIWWKCDGQKDCLDGSDEPNTCP), 3550–3588 (FCRLGQFQCSDGNCTSSNFICNARQDCPDGSDEDAVLCE), 3591–3629 (RCESNQWQCANKRCIPESWQCDSLNDCGDNSDEDSSHCA), 3632–3670 (TCLPGYFKCANGHCIPQSWKCDVDNDCGDYSDEPLQECM), 3675–3713 (RCDNYTEFDCKTNYRCIPKWAVCNGFDDCRDNSDEQNCE), 3716–3753 (TCKPSGEFRCTNHHCIPLRWRCDGHNDCGDNSDEENCV), 3756–3792 (QCSESEFRCDDQTCIPSRWICDQNNDCGDNSDERDCE), 3795–3831 (TCHPGYFQCSSGHCIPDQMRCDGFADCLDASDEATCP), and 3839–3877 (YCPATLFECKNHVCVQPSWKCDGDNDCGDGSDEELHLCL). Cystine bridges form between C3510-C3523, C3517-C3536, C3530-C3546, C3551-C3563, C3558-C3576, C3570-C3587, C3592-C3604, C3599-C3617, C3611-C3628, C3633-C3645, C3640-C3658, C3652-C3669, C3676-C3690, C3684-C3703, C3697-C3712, C3717-C3730, C3725-C3743, C3737-C3752, C3757-C3769, C3764-C3782, C3776-C3791, C3796-C3808, C3803-C3821, C3815-C3830, C3840-C3852, C3847-C3865, and C3859-C3876. A glycan (N-linked (GlcNAc...) asparagine) is linked at N3562. N3678 carries an N-linked (GlcNAc...) asparagine glycan. N3878 carries N-linked (GlcNAc...) asparagine glycosylation. 2 consecutive LDL-receptor class A domains span residues 3880–3919 (TCDLTNRFRCDNNRCIYRHELCNHEDDCGDGSDEKKENCL) and 3925–3961 (PCTEGEFKCSNGHCISQHLVCDDVDDCGDHFDETGCN). Cystine bridges form between C3881–C3894, C3889–C3907, C3901–C3918, C3926–C3938, C3933–C3951, C3945–C3960, C3968–C3977, C3973–C3987, C3989–C4003, C4009–C4019, C4015–C4028, and C4030–C4045. The 41-residue stretch at 3964 to 4004 (EERSCAENLCEHNCTQLIGGGFICSCRPGFKASSLNRNSCE) folds into the EGF-like 3 domain. N3976 carries an N-linked (GlcNAc...) asparagine glycan. In terms of domain architecture, EGF-like 4; calcium-binding spans 4005–4046 (DINECEQFGVCPQNCHNTKGSYECTCAEGFRSMSEHYGERCA). A glycan (N-linked (GlcNAc...) asparagine) is linked at N4066. LDL-receptor class B repeat units lie at residues 4152-4194 (RHIY…NPKQ), 4195-4238 (GLMY…DYVN), and 4240-4281 (DRIY…FESQ). N4325 carries an N-linked (GlcNAc...) asparagine glycan. Residues 4375-4409 (MPPPCRCMNEGNCYFDKNNLPKCKCPSGYMGEYCE) form the EGF-like 5 domain. 3 disulfides stabilise this stretch: C4379–C4387, C4381–C4397, and C4399–C4408. Residues 4423-4443 (AVLVTLILIIIIGGLVALGFF) form a helical membrane-spanning segment. The Cytoplasmic portion of the chain corresponds to 4444–4652 (HYRKTGSILI…ANLVREDSEA (209 aa)). The SH3-binding signature appears at 4450–4459 (SILISMPRLP). The short motif at 4453–4458 (ISMPRL) is the PxLPxI/L motif 1; mediates interaction with ANKRA2 element. A PxLPxI/L motif 2; mediates interaction with ANKRA2 motif is present at residues 4456–4461 (PRLPSL). S4460 carries the phosphoserine modification. An Endocytosis signal motif is present at residues 4518-4523 (FENPMY). Residues 4536–4553 (TTTQVSESGNVYNKNYGS) show a composition bias toward polar residues. The tract at residues 4536 to 4652 (TTTQVSESGN…ANLVREDSEA (117 aa)) is disordered. The residue at position 4568 (S4568) is a Phosphoserine. The interaction with DAB2 stretch occupies residues 4588 to 4601 (QNTNFENPIYAETE). The short motif at 4594–4597 (NPIY) is the NPXY motif element. An SH2-binding motif is present at residues 4597-4600 (YAET). Positions 4610–4621 (VTPPPSPSPPAK) match the SH3-binding motif. S4615 is modified (phosphoserine). The segment covering 4626–4636 (KGTTPAYSATE) has biased composition (polar residues). A Phosphothreonine modification is found at T4629. Phosphoserine is present on S4650.

This sequence belongs to the LDLR family. In terms of assembly, binds plasminogen, extracellular matrix components, plasminogen activator-plasminogen activator inhibitor type I complex, apolipoprotein E-enriched beta-VLDL, lipoprotein lipase, lactoferrin, CLU/clusterin and calcium. Forms a multimeric complex together with LRPAP1. Interacts (via PxLPxI/L motif) with ANKRA2 (via ankyrin repeats). Interacts with LRP2BP. Interacts (via NPXY motif) with DAB2; the interaction is not affected by tyrosine phosphorylation of the NPXY motif. Interacts with MB. Interacts with BMP4. Interacts with the Sonic hedgehog protein N-product which is the active product of SHH. Interacts with CST3 in a calcium-dependent manner. Interacts with the vitamin-D binding protein GC/DBP. Interacts with sex hormone-binding protein SHBG. Interacts with angiotensin-2. Also interacts with angiotensin 1-7. Interacts with APOM. Interacts with selenoprotein SEPP1. Interacts with LEP. Interacts with ALB. Interacts with the antiapoptotic protein BIRC5/survivin. Interacts with matrix metalloproteinase MMP2 in complex with metalloproteinase inhibitor TIMP1. In neurons, forms a trimeric complex with APP and APPB1/FE65. Interacts with LDLRAP1/ARH; mediates trafficking of LRP2 to the endocytic recycling compartment. Does not interact with beta-amyloid protein 40 alone but interacts with the complex composed of beta-amyloid protein 40 and CLU/APOJ. Interacts with MDK. In terms of processing, a fraction undergoes proteolytic cleavage of the extracellular domain at the cell membrane to generate a cytoplasmic tail fragment. This is internalized into the early endosome from where it trafficks in an LDLRAP1/ARH-dependent manner to the endocytic recycling compartment (ERC). In the ERC, it is further cleaved by gamma-secretase to release a fragment which translocates to the nucleus and mediates transcriptional repression. N-glycosylation is required for ligand binding.

It is found in the apical cell membrane. It localises to the endosome lumen. The protein localises to the membrane. Its subcellular location is the clathrin-coated pit. The protein resides in the cell projection. It is found in the dendrite. It localises to the axon. Functionally, multiligand endocytic receptor. Acts together with CUBN to mediate endocytosis of high-density lipoproteins. Mediates receptor-mediated uptake of polybasic drugs such as aprotinin, aminoglycosides and polymyxin B. In the kidney, mediates the tubular uptake and clearance of leptin. Also mediates transport of leptin across the blood-brain barrier through endocytosis at the choroid plexus epithelium. Endocytosis of leptin in neuronal cells is required for hypothalamic leptin signaling and leptin-mediated regulation of feeding and body weight. Mediates endocytosis and subsequent lysosomal degradation of CST3 in kidney proximal tubule cells. Mediates renal uptake of 25-hydroxyvitamin D3 in complex with the vitamin D3 transporter GC/DBP. Mediates renal uptake of metallothionein-bound heavy metals. Together with CUBN, mediates renal reabsorption of myoglobin. Mediates renal uptake and subsequent lysosomal degradation of APOM. Plays a role in kidney selenium homeostasis by mediating renal endocytosis of selenoprotein SEPP1. Mediates renal uptake of the antiapoptotic protein BIRC5/survivin which may be important for functional integrity of the kidney. Mediates renal uptake of matrix metalloproteinase MMP2 in complex with metalloproteinase inhibitor TIMP1. Mediates endocytosis of Sonic hedgehog protein N-product (ShhN), the active product of SHH. Also mediates ShhN transcytosis. In the embryonic neuroepithelium, mediates endocytic uptake and degradation of BMP4, is required for correct SHH localization in the ventral neural tube and plays a role in patterning of the ventral telencephalon. Required at the onset of neurulation to sequester SHH on the apical surface of neuroepithelial cells of the rostral diencephalon ventral midline and to control PTCH1-dependent uptake and intracellular trafficking of SHH. During neurulation, required in neuroepithelial cells for uptake of folate bound to the folate receptor FOLR1 which is necessary for neural tube closure. In the adult brain, negatively regulates BMP signaling in the subependymal zone which enables neurogenesis to proceed. In astrocytes, mediates endocytosis of ALB which is required for the synthesis of the neurotrophic factor oleic acid. Involved in neurite branching. During optic nerve development, required for SHH-mediated migration and proliferation of oligodendrocyte precursor cells. Mediates endocytic uptake and clearance of SHH in the retinal margin which protects retinal progenitor cells from mitogenic stimuli and keeps them quiescent. Plays a role in reproductive organ development by mediating uptake in reproductive tissues of androgen and estrogen bound to the sex hormone binding protein SHBG. Mediates endocytosis of angiotensin-2. Also mediates endocytosis of angiotensis 1-7. Binds to the complex composed of beta-amyloid protein 40 and CLU/APOJ and mediates its endocytosis and lysosomal degradation. Required for embryonic heart development. Required for normal hearing, possibly through interaction with estrogen in the inner ear. The protein is Low-density lipoprotein receptor-related protein 2 of Sus scrofa (Pig).